Here is a 207-residue protein sequence, read N- to C-terminus: LexA repressor (207 aa).

Positions 28 to 48 form a DNA-binding region, H-T-H motif; it reads RAEIARELGFRSANAAEEHLK. Catalysis depends on for autocatalytic cleavage activity residues S124 and K161.

It belongs to the peptidase S24 family. Homodimer.

The catalysed reaction is Hydrolysis of Ala-|-Gly bond in repressor LexA.. Functionally, represses a number of genes involved in the response to DNA damage (SOS response), including recA and lexA. In the presence of single-stranded DNA, RecA interacts with LexA causing an autocatalytic cleavage which disrupts the DNA-binding part of LexA, leading to derepression of the SOS regulon and eventually DNA repair. The protein is LexA repressor of Vibrio vulnificus (strain CMCP6).